Here is a 118-residue protein sequence, read N- to C-terminus: Myotrophin (118 aa).

An N-acetylcysteine modification is found at Cys-2. An ANK 1 repeat occupies 2–30; the sequence is CDKEFMWALKNGDLDEVKDYVAKGEDVNR. N6-acetyllysine occurs at positions 4, 11, and 24. Position 31 is a phosphothreonine (Thr-31). ANK repeat units follow at residues 34–66 and 67–99; these read GGRK…APDK and HHIT…VKGP.

It belongs to the myotrophin family. Interacts with the heterodimer formed by CAPZA1 and CAPZB. Interacts with RELA.

It is found in the cytoplasm. It localises to the nucleus. The protein resides in the perinuclear region. Functionally, plays a role in the regulation of the growth of actin filaments. Inhibits the activity of the F-actin-capping protein complex formed by the CAPZA1 and CAPZB heterodimer. Promotes dimerization of NF-kappa-B subunits and regulates NF-kappa-B transcription factor activity. Promotes growth of cardiomyocytes, but not cardiomyocyte proliferation. Promotes cardiac muscle hypertrophy. In Rattus norvegicus (Rat), this protein is Myotrophin (Mtpn).